The sequence spans 202 residues: Large ribosomal subunit protein bL25 (202 aa).

The interval 180-202 (PKQEAFEEDAEPSPGEEPEGENQ) is disordered. Positions 185–202 (FEEDAEPSPGEEPEGENQ) are enriched in acidic residues.

It belongs to the bacterial ribosomal protein bL25 family. CTC subfamily. In terms of assembly, part of the 50S ribosomal subunit; part of the 5S rRNA/L5/L18/L25 subcomplex. Contacts the 5S rRNA. Binds to the 5S rRNA independently of L5 and L18.

This is one of the proteins that binds to the 5S RNA in the ribosome where it forms part of the central protuberance. The chain is Large ribosomal subunit protein bL25 from Bacillus velezensis (strain DSM 23117 / BGSC 10A6 / LMG 26770 / FZB42) (Bacillus amyloliquefaciens subsp. plantarum).